We begin with the raw amino-acid sequence, 227 residues long: Atypical response regulator protein ChxR (227 aa).

Positions 6 to 108 (HVLLVSEHWD…ILKSAISLFL (103 aa)) constitute a Response regulatory domain. The segment at residues 117 to 213 (PESIRFGPNV…LRGVGYLFSD (97 aa)) is a DNA-binding region (ompR/PhoB-type).

Homodimer.

In terms of biological role, may be a global positive regulator of transcription. Binds a cis-acting element of its own promoter DNA sequence and is hence probably also involved in its own transcription activation. The recognition sequence is 5'-WHGAWNH-N(3-5)-WHGAWNH-3', where W is A/T, H is C/A/T, N is G/C/A/T and the linker length in the middle is 3 to 5 nucleotides. The sequence is that of Atypical response regulator protein ChxR from Chlamydia trachomatis serovar L2 (strain ATCC VR-902B / DSM 19102 / 434/Bu).